The sequence spans 635 residues: MPIQILPPQLANQIAAGEVVERPASVVKELVENSLDAGATRIDIDIERGGAKLIRIRDNGCGISKDDLALALARHATSKISSLEDLEAILSMGFRGEALASISSVSRLILTSRTAEQSEAWQAYAEGRDMAVTIKPAAHPVGSTLEVLDLFYNTPARRKFMRTEKTEFGHIDEVVRRIALARFDVAINLNHNGKLIRQYRAAPDPAQHERRLASICGPAFLQHALAIAWQHGDLNIHGWVADPAASHTLSEMQYCYVNNRMMRDRLINHAIRQAYQDRLNDAQQPAYVLYLDIDPHQVDVNVHPAKHEVRFHQARLVHDFIYQAVTAVLQQTNAPILNISEEGEVDAPRWQQENRVAAGTNKYAQPEAAKSSAAEQAVARERSSARERAALAYKEDHPYQKQQGELYRQLLQPSAAAKPATSPAAIPASSVSSPSIPVQRITQAEEPLHGDNYSFGRVLTVFPPCYALIEYQGGVALLSLAVAERWLKQAQLSPPEEGLRPQPLLIPLKITLDKNEIAACQNHEKLLITMGIELSVEQGRATLRAVSLPLRQQNLQKLIPELLGYLSQHEEISPDTLATWLARHLGSEHEVWNVSQAIQLLTEVERLCPQLVQSPPAGLLQPIDIKAALATLTHE.

It belongs to the DNA mismatch repair MutL/HexB family.

Its function is as follows. This protein is involved in the repair of mismatches in DNA. It is required for dam-dependent methyl-directed DNA mismatch repair. May act as a 'molecular matchmaker', a protein that promotes the formation of a stable complex between two or more DNA-binding proteins in an ATP-dependent manner without itself being part of a final effector complex. This chain is DNA mismatch repair protein MutL, found in Yersinia pestis bv. Antiqua (strain Angola).